Consider the following 394-residue polypeptide: F-box/kelch-repeat protein At1g23390 (394 aa).

In terms of domain architecture, F-box spans 15–62 (EEESSIDGDILESILSYLPLLDLDSACQVSKSWNRAVFYSLRRLKTMP). 4 Kelch repeats span residues 65-111 (FVYN…RSSH), 155-204 (SLII…TWLS), 206-252 (AVSS…SIGF), and 321-369 (MVYV…VIVA).

In Arabidopsis thaliana (Mouse-ear cress), this protein is F-box/kelch-repeat protein At1g23390.